The primary structure comprises 257 residues: tRNA uridine(34) hydroxylase (257 aa).

Residues 128–222 (NGRRLVMLDA…YFEQVGGEGY (95 aa)) form the Rhodanese domain. C182 (cysteine persulfide intermediate) is an active-site residue.

The protein belongs to the TrhO family.

It carries out the reaction uridine(34) in tRNA + AH2 + O2 = 5-hydroxyuridine(34) in tRNA + A + H2O. Catalyzes oxygen-dependent 5-hydroxyuridine (ho5U) modification at position 34 in tRNAs. In Xylella fastidiosa (strain M23), this protein is tRNA uridine(34) hydroxylase.